Reading from the N-terminus, the 335-residue chain is MFVDQITLELRAGKGGNGVVAWRKEKYLPKGGPYGGNGGNGGSILIEAVTNMYSFEEYRNLSFLKADDGQAGASNNRTGRNGKDLVLKVPEGTLLRDAATGELIHDFTKDGERIVVCQGGRGGKGNVFFKTSTNRAPTKATPGKPGEIRLVELELKLIADIGLVGFPNAGKSTLFNTLARTEVKVGAYPFTTLHPSLGLVHQEGMLYQKPWIMADIPGIIEGASQNRGLGLDFLRHIERTRLLLFVIDISGIERHSPEQDLKILMGELLAYKEELKDKDMVIALNKIDQLLPDEREERVALLKQQFPDQEFILLSGLTGEGVDALYDLFKSKLSE.

An Obg domain is found at methionine 1–isoleucine 158. The OBG-type G domain maps to alanine 159–serine 334. GTP contacts are provided by residues glycine 165–serine 172, phenylalanine 190–histidine 194, aspartate 215–glycine 218, asparagine 285–aspartate 288, and serine 315–leucine 317. Mg(2+)-binding residues include serine 172 and threonine 192.

This sequence belongs to the TRAFAC class OBG-HflX-like GTPase superfamily. OBG GTPase family. As to quaternary structure, monomer. The cofactor is Mg(2+).

It localises to the cytoplasm. In terms of biological role, an essential GTPase which binds GTP, GDP and possibly (p)ppGpp with moderate affinity, with high nucleotide exchange rates and a fairly low GTP hydrolysis rate. Plays a role in control of the cell cycle, stress response, ribosome biogenesis and in those bacteria that undergo differentiation, in morphogenesis control. In Chlamydia trachomatis serovar A (strain ATCC VR-571B / DSM 19440 / HAR-13), this protein is GTPase Obg.